A 732-amino-acid polypeptide reads, in one-letter code: Acetophenone carboxylase gamma subunit (732 aa).

Belongs to the HyuA family. In terms of assembly, acetophenone carboxylase consists of five subunits; a heterooctameric subcomplex of two alpha (Apc1), two beta (Apc2), two gamma (Apc3) and two delta (Apc4) subunits assembles with the epsilon (Apc5) subunit in an unknown stoichiometry. It depends on Mg(2+) as a cofactor. Mn(2+) serves as cofactor.

The protein localises to the cytoplasm. It carries out the reaction acetophenone + hydrogencarbonate + 2 ATP + H2O = 3-oxo-3-phenylpropanoate + 2 ADP + 2 phosphate + 2 H(+). Its activity is regulated as follows. Inhibited by zinc ions, carbamoylphosphate and beta,gamma-imido-ATP. In terms of biological role, catalyzes the carboxylation of acetophenone to form 3-oxo-3-phenylpropanoate (benzoylacetate) in the anaerobic catabolism of ethylbenzene. Also carboxylates propiophenone at the same rate and 4-acetyl-pyridine at lower rates. In Aromatoleum aromaticum (strain DSM 19018 / LMG 30748 / EbN1) (Azoarcus sp. (strain EbN1)), this protein is Acetophenone carboxylase gamma subunit (apc3).